Reading from the N-terminus, the 299-residue chain is Taste receptor type 2 member 5 (299 aa).

Position 1 (methionine 1) is a topological domain, extracellular. Residues leucine 2–isoleucine 22 traverse the membrane as a helical segment. Residues glycine 23–asparagine 45 are Cytoplasmic-facing. A helical membrane pass occupies residues leucine 46 to leucine 66. Residues serine 67 to serine 82 are Extracellular-facing. A helical membrane pass occupies residues isoleucine 83–tyrosine 103. Over cysteine 104–leucine 127 the chain is Cytoplasmic. A helical transmembrane segment spans residues tryptophan 128–phenylalanine 148. The Extracellular segment spans residues tyrosine 149–serine 175. Residue asparagine 155 is glycosylated (N-linked (GlcNAc...) asparagine). A helical transmembrane segment spans residues glycine 176–tyrosine 196. The Cytoplasmic segment spans residues threonine 197 to serine 223. The chain crosses the membrane as a helical span at residues leucine 224–serine 244. Topologically, residues lysine 245–serine 253 are extracellular. The helical transmembrane segment at valine 254–methionine 274 threads the bilayer. Over glycine 275–proline 299 the chain is Cytoplasmic.

Belongs to the G-protein coupled receptor T2R family.

It is found in the membrane. Its function is as follows. Receptor that may play a role in the perception of bitterness and is gustducin-linked. May play a role in sensing the chemical composition of the gastrointestinal content. The activity of this receptor may stimulate alpha gustducin, mediate PLC-beta-2 activation and lead to the gating of TRPM5. The polypeptide is Taste receptor type 2 member 5 (TAS2R5) (Gorilla gorilla gorilla (Western lowland gorilla)).